The following is a 1915-amino-acid chain: Protein NLRC5 (1915 aa).

The segment at 103-137 is disordered; sequence LGAGEESCPGPQLYHGAKRPFQSYGSSPRRKNSKK. One can recognise an NACHT domain in the interval 223–542; sequence RVTVLLGKAG…HTVDKDTLVE (320 aa). 229-236 lines the ATP pocket; sequence GKAGMGKT. 27 LRR repeats span residues 622–646, 716–740, 744–771, 772–796, 871–898, 900–923, 930–953, 1006–1033, 1034–1055, 1138–1161, 1162–1184, 1240–1263, 1265–1292, 1348–1371, 1481–1504, 1519–1542, 1552–1575, 1576–1598, 1603–1626, 1631–1654, 1659–1682, 1687–1711, 1715–1738, 1741–1768, 1769–1795, 1821–1845, and 1849–1872; these read VAET…SFHN, MGSL…LIQT, CSQL…LLPS, LPKL…LVKV, SPQL…AASQ, HIAQ…VLKA, LEDL…PREQ, THNL…LLPG, LGPL…VFSL, EVQL…LPQL, PQLS…LLAD, CNAL…CLLE, LPQL…LLET, AQQL…MLLN, SKLL…FSQV, CHHL…LLMG, KLHL…LSRM, TLLQ…CLAA, LPEL…CLAA, LPEL…LVKS, FEHL…ELAQ, PPQL…ALEQ, CPHI…RLPL, FPAL…LAQV, and MGQL…LLAQ.

The protein belongs to the NLRP family. Interacts with CHUK and IKBKB; prevents CHUK and IKBKB phosphorylation and inhibits their kinase activity. Interacts with RIGI and IFIH1; blocks the interaction of MAVS to RIGI. As to expression, expressed in spleen, thymus and lung.

Its subcellular location is the cytoplasm. Its function is as follows. Probable regulator of the NF-kappa-B and type I interferon signaling pathways. May also regulate the type II interferon signaling pathway. Plays a role in homeostatic control of innate immunity and in antiviral defense mechanisms. The polypeptide is Protein NLRC5 (Nlrc5) (Mus musculus (Mouse)).